The chain runs to 130 residues: MARGVSYVSAAQLVPMLRDPRIAVVDVRDEERIYDAHIAGSHHYASDSFGERLPELAQATKGKETLVFHCALSKVRGPSCAQMYLDYLSEADEDSDVKNIMVLERGFNGWELSGRPVCRCKDAPCKGVCS.

The region spanning 18 to 119 (RDPRIAVVDV…WELSGRPVCR (102 aa)) is the Rhodanese domain. C70 serves as the catalytic Cysteine persulfide intermediate.

The catalysed reaction is [glutaredoxin]-dithiol + arsenate + glutathione + H(+) = glutathionyl-S-S-[glutaredoxin] + arsenite + H2O. Possesses arsenate reductase activity in vitro. Catalyzes the reduction of arsenate [As(V)] to arsenite [As(III)]. May play a role in arsenic retention in roots. Its function is as follows. Possesses phosphatase activity towards p-nitrophenyl phosphate in vitro. The polypeptide is Arsenate reductase 2.2 (ACR2.2) (Oryza sativa subsp. japonica (Rice)).